Reading from the N-terminus, the 191-residue chain is UPF0312 protein Pmen_0419 (191 aa).

The first 22 residues, 1-22, serve as a signal peptide directing secretion; the sequence is MLKNALAALVLGSALIGGQAMA.

Belongs to the UPF0312 family. Type 1 subfamily.

It is found in the periplasm. This chain is UPF0312 protein Pmen_0419, found in Ectopseudomonas mendocina (strain ymp) (Pseudomonas mendocina).